Reading from the N-terminus, the 198-residue chain is Putative pseudouridine methyltransferase (198 aa).

S-adenosyl-L-methionine-binding residues include methionine 132 and cysteine 186.

The protein belongs to the methyltransferase superfamily. TrmY family.

The protein localises to the cytoplasm. This chain is Putative pseudouridine methyltransferase, found in Shewanella baltica (strain OS223).